Reading from the N-terminus, the 295-residue chain is Dehydrodolichyl diphosphate synthase 6 (295 aa).

Belongs to the UPP synthase family. Mg(2+) is required as a cofactor.

Its pathway is protein modification; protein glycosylation. In terms of biological role, catalyzes cis-prenyl chain elongation to produce the polyprenyl backbone of dolichol, a glycosyl carrier-lipid required for the biosynthesis of several classes of glycoprotein. The chain is Dehydrodolichyl diphosphate synthase 6 from Arabidopsis thaliana (Mouse-ear cress).